A 64-amino-acid chain; its full sequence is DNA-binding protein 7d (64 aa).

Residues Lys-5, Lys-7, Lys-61, Lys-63, and Lys-64 each carry the N6-methyllysine modification.

It belongs to the 7 kDa DNA-binding/endoribonuclease P2 family. In terms of assembly, monomer.

It is found in the cytoplasm. In terms of biological role, can constrain negative DNA supercoils. May be involved in maintaining the integrity of the genome at high temperature. Stimulates the Holliday junction cleavage activity of Hjc. This chain is DNA-binding protein 7d (sso7d), found in Saccharolobus solfataricus (strain ATCC 35092 / DSM 1617 / JCM 11322 / P2) (Sulfolobus solfataricus).